Reading from the N-terminus, the 652-residue chain is uncharacterized protein (652 aa).

The segment covering 1–13 (MSVTESKAKTERK) has biased composition (basic and acidic residues). The interval 1–21 (MSVTESKAKTERKSSRKPAKT) is disordered.

It belongs to the ParB family.

This is an uncharacterized protein from Escherichia coli (strain K12).